The following is a 454-amino-acid chain: MITHISPLGSMDMLSQLEVDMLKRTASSDLYQLFRNCSLAVLNSGSLTDNSKELLSRFENFDINVLRRERGVKLELINPPEEAFVDGRIIRALQANLFAVLRDILFVYGQIHNTVRFPNLNLDNSVHITNLVFSILRNARALHVGEAPNMVVCWGGHSINENEYLYARRVGNQLGLRELNICTGCGPGAMEAPMKGAAVGHAQQRYKDSRFIGMTEPSIIAAEPPNPLVNELIIMPDIEKRLEAFVRIAHGIIIFPGGVGTAEELLYLLGILMNPANKDQVLPLILTGPKESADYFRVLDEFVVHTLGENARRHYRIIIDDAAEVARQMKKSMPLVKENRRDTGDAYSFNWSMRIAPDLQMPFEPSHENMANLKLYPDQPVEVLAADLRRAFSGIVAGNVKEVGIRAIEEFGPYKINGDKEIMRRMDDLLQGFVAQHRMKLPGSAYIPCYEICT.

Belongs to the LOG family.

The enzyme catalyses a pyrimidine ribonucleoside 5'-phosphate + H2O = a pyrimidine nucleobase + D-ribose 5-phosphate. It carries out the reaction AMP + H2O = adenine + D-ribose 5-phosphate. It catalyses the reaction GMP + H2O = guanine + D-ribose 5-phosphate. The catalysed reaction is CMP + H2O = cytosine + D-ribose 5-phosphate. The enzyme catalyses IMP + H2O = hypoxanthine + D-ribose 5-phosphate. It carries out the reaction UMP + H2O = D-ribose 5-phosphate + uracil. It catalyses the reaction dTMP + H2O = 2-deoxy-D-ribose 5-phosphate + thymine. Functionally, catalyzes the hydrolysis of the N-glycosidic bond of diverse pyrimidine and purine nucleotide 5'-monophosphates, to form ribose 5-phosphate and the corresponding free base. Can use AMP, GMP, IMP, CMP, dTMP and UMP as substrates. Cannot catalyze the reverse reactions. May contribute to nucleoside pool homeostasis by degrading excess nucleotides and feeding back the ribose moiety to catabolism. This chain is Pyrimidine/purine nucleotide 5'-monophosphate nucleosidase, found in Escherichia coli O157:H7.